The sequence spans 192 residues: Ciliary microtubule inner protein 3 (192 aa).

Positions 24–108 (RAGAEGGPSL…SGQKVKAPHR (85 aa)) are disordered. Over residues 55–64 (APRRPPRPRT) the composition is skewed to basic residues.

The protein belongs to the CIMIP3-like family. As to expression, detected in the sperm flagellum (at protein level).

It is found in the cytoplasm. The protein localises to the cytoskeleton. The protein resides in the flagellum axoneme. This chain is Ciliary microtubule inner protein 3, found in Bos taurus (Bovine).